Consider the following 338-residue polypeptide: Malate dehydrogenase, mitochondrial (338 aa).

The transit peptide at 1-24 directs the protein to the mitochondrion; it reads MLSALARPAGAALRRSFSTSAQNN. NAD(+) contacts are provided by residues 31–37 and Asp57; that span reads GASGGIG. Ser33 carries O-linked (GlcNAc) serine glycosylation. 2 positions are modified to N6-acetyllysine; alternate: Lys78 and Lys91. An N6-succinyllysine; alternate mark is found at Lys78 and Lys91. Positions 104 and 110 each coordinate substrate. NAD(+) contacts are provided by residues Asn117 and 140-142; that span reads ISN. Asn142 is a binding site for substrate. An N6-acetyllysine modification is found at Lys165. Arg176 contacts substrate. Lys185 carries the N6-acetyllysine; alternate modification. Lys185 carries the post-translational modification N6-succinyllysine; alternate. His200 serves as the catalytic Proton acceptor. Lys203 carries the N6-succinyllysine modification. N6-acetyllysine; alternate is present on residues Lys215 and Lys239. N6-succinyllysine; alternate occurs at positions 215 and 239. Lys239 is modified (N6-malonyllysine; alternate). Ser246 bears the Phosphoserine mark. Met251 contacts NAD(+). Lys269 carries the N6-succinyllysine modification. N6-acetyllysine; alternate occurs at positions 296, 301, 307, 314, and 324. N6-succinyllysine; alternate is present on residues Lys296, Lys301, Lys307, Lys314, and Lys324. Lys307 carries the post-translational modification N6-malonyllysine; alternate. Phosphoserine is present on Ser326. An N6-acetyllysine; alternate mark is found at Lys328, Lys329, and Lys335. Lys328 carries the post-translational modification N6-succinyllysine; alternate. N6-malonyllysine; alternate is present on Lys329. N6-succinyllysine; alternate is present on Lys335.

This sequence belongs to the LDH/MDH superfamily. MDH type 1 family. As to quaternary structure, homodimer. In terms of processing, acetylation is enhanced after treatment either with trichostin A (TCA) or with nicotinamide (NAM) with the appearance of tri- and tetraacetylations. Glucose also increases acetylation.

The protein localises to the mitochondrion matrix. The catalysed reaction is (S)-malate + NAD(+) = oxaloacetate + NADH + H(+). Its activity is regulated as follows. Enzyme activity is enhanced by acetylation. In Bos taurus (Bovine), this protein is Malate dehydrogenase, mitochondrial (MDH2).